We begin with the raw amino-acid sequence, 352 residues long: Histidinol-phosphate aminotransferase (352 aa).

N6-(pyridoxal phosphate)lysine is present on K221.

The protein belongs to the class-II pyridoxal-phosphate-dependent aminotransferase family. Histidinol-phosphate aminotransferase subfamily. As to quaternary structure, homodimer. The cofactor is pyridoxal 5'-phosphate.

It carries out the reaction L-histidinol phosphate + 2-oxoglutarate = 3-(imidazol-4-yl)-2-oxopropyl phosphate + L-glutamate. Its pathway is amino-acid biosynthesis; L-histidine biosynthesis; L-histidine from 5-phospho-alpha-D-ribose 1-diphosphate: step 7/9. The protein is Histidinol-phosphate aminotransferase of Staphylococcus aureus (strain MRSA252).